A 470-amino-acid chain; its full sequence is Mucin-like protein 3 (470 aa).

Positions 1–29 (MAQMTSGLYPMFGFFICLLFLPASWEAGA) are cleaved as a signal peptide. Residues 30–401 (NTFQELQKTG…EGSNSFPAWA (372 aa)) lie on the Extracellular side of the membrane. Disordered stretches follow at residues 57–234 (RALS…HTIP) and 248–318 (TKEA…KAPE). A compositionally biased stretch (polar residues) spans 75-87 (STATQKPKRQCNT). Asn-122 carries N-linked (GlcNAc...) asparagine glycosylation. Over residues 132–152 (ARNERSADDHGSTNSEKRSDG) the composition is skewed to basic and acidic residues. Polar residues predominate over residues 169–193 (TRTSGTPVSSTETSTKLRTTSQKPE). A compositionally biased stretch (basic and acidic residues) spans 194–203 (TSSHDSDLIR). Residues 204-222 (KSTSLPVKSTEVSRTSYRT) show a composition bias toward polar residues. Residues 260–273 (KYERETRSASERIS) show a composition bias toward basic and acidic residues. Over residues 283 to 295 (HTPSAGETTTQVS) the composition is skewed to polar residues. N-linked (GlcNAc...) asparagine glycosylation occurs at Asn-325. A helical membrane pass occupies residues 402 to 422 (IVVVILMAVIILLIFLGLIFL). At 423–470 (VSCASRARHQLTQNSEDAEPEDKGGRNSYPVYLMEQQNLNLNQISSPP) the chain is on the cytoplasmic side.

The protein localises to the cell membrane. The protein resides in the cytoplasm. In terms of biological role, may modulate NF-kappaB signaling and play a role in cell growth. This chain is Mucin-like protein 3, found in Rattus norvegicus (Rat).